The sequence spans 839 residues: Protein translocase subunit SecA (839 aa).

ATP-binding positions include glutamine 85, 103 to 107, and aspartate 493; that span reads GEGKT. The span at 780–790 shows a compositional bias: basic and acidic residues; that stretch reads QIHEQERERAS. Residues 780–839 are disordered; it reads QIHEQERERASQRATTAAPQNIQSQQSANTDDLPKVERNEACPCGSGKKFKNCHGRKSFS. Over residues 791 to 809 the composition is skewed to polar residues; it reads QRATTAAPQNIQSQQSANT. Residues cysteine 821, cysteine 823, cysteine 832, and histidine 833 each contribute to the Zn(2+) site. Positions 827 to 839 are enriched in basic residues; the sequence is KKFKNCHGRKSFS.

This sequence belongs to the SecA family. In terms of assembly, monomer and homodimer. Part of the essential Sec protein translocation apparatus which comprises SecA, SecYEG and auxiliary proteins SecDF. Other proteins may also be involved. Zn(2+) is required as a cofactor.

Its subcellular location is the cell membrane. It is found in the cytoplasm. The catalysed reaction is ATP + H2O + cellular proteinSide 1 = ADP + phosphate + cellular proteinSide 2.. In terms of biological role, part of the Sec protein translocase complex. Interacts with the SecYEG preprotein conducting channel. Has a central role in coupling the hydrolysis of ATP to the transfer of proteins into and across the cell membrane, serving as an ATP-driven molecular motor driving the stepwise translocation of polypeptide chains across the membrane. This chain is Protein translocase subunit SecA, found in Streptococcus pyogenes serotype M6 (strain ATCC BAA-946 / MGAS10394).